The primary structure comprises 83 residues: U5-theraphotoxin-Hs1b 1 (83 aa).

An N-terminal signal peptide occupies residues 1–21; sequence MKTSMFLTLTGLVLLFVVCYA. Positions 22–49 are excised as a propeptide; sequence SESEEKEFPKELLSSIFAADSDFKEEER. 3 disulfides stabilise this stretch: Cys51/Cys63, Cys56/Cys68, and Cys62/Cys75.

This sequence belongs to the neurotoxin 10 (Hwtx-1) family. 51 (Hntx-8) subfamily. Hntx-8 sub-subfamily. Expressed by the venom gland.

It localises to the secreted. Its function is as follows. Weakly inhibits 5HT3A receptors and Kv1.3/KCNA3 voltage-gated potassium channels. Agglutinates erythrocytes. The sequence is that of U5-theraphotoxin-Hs1b 1 from Cyriopagopus schmidti (Chinese bird spider).